Reading from the N-terminus, the 91-residue chain is Large ribosomal subunit protein uL23 (91 aa).

This sequence belongs to the universal ribosomal protein uL23 family. As to quaternary structure, part of the 50S ribosomal subunit. Contacts protein L29, and trigger factor when it is bound to the ribosome.

In terms of biological role, one of the early assembly proteins it binds 23S rRNA. One of the proteins that surrounds the polypeptide exit tunnel on the outside of the ribosome. Forms the main docking site for trigger factor binding to the ribosome. The protein is Large ribosomal subunit protein uL23 of Staphylococcus haemolyticus (strain JCSC1435).